We begin with the raw amino-acid sequence, 402 residues long: Pentalenic acid synthase (402 aa).

The disordered stretch occupies residues 1–28 (MTEPGTSVSAPVAFPQDRTCPYDPPTAY). Position 351 (Cys351) interacts with heme.

Belongs to the cytochrome P450 family. It depends on heme as a cofactor.

It carries out the reaction 1-deoxypentalenate + reduced 2[4Fe-4S]-[ferredoxin] + O2 + 2 H(+) = pentalenate + oxidized 2[4Fe-4S]-[ferredoxin] + H2O. It functions in the pathway antibiotic biosynthesis; neopentalenolactone biosynthesis. Its function is as follows. Catalyzes the conversion of 1-deoxypentalenic acid to pentalenic acid in the biosynthesis of neopentalenolactone antibiotic. The protein is Pentalenic acid synthase (cyp28) of Streptomyces avermitilis (strain ATCC 31267 / DSM 46492 / JCM 5070 / NBRC 14893 / NCIMB 12804 / NRRL 8165 / MA-4680).